We begin with the raw amino-acid sequence, 393 residues long: Exosome complex component RRP45 (393 aa).

The interval methionine 1–alanine 268 is ARE binding.

Belongs to the RNase PH family. In terms of assembly, component of the RNA exosome complex.

The protein resides in the cytoplasm. The protein localises to the nucleus. It is found in the nucleolus. It localises to the nucleoplasm. Its function is as follows. Non-catalytic component of the RNA exosome complex which has 3'-&gt;5' exoribonuclease activity and participates in a multitude of cellular RNA processing and degradation events. In the nucleus, the RNA exosome complex is involved in proper maturation of stable RNA species such as rRNA, snRNA and snoRNA, in the elimination of RNA processing by-products and non-coding 'pervasive' transcripts, such as antisense RNA species and promoter-upstream transcripts (PROMPTs), and of mRNAs with processing defects, thereby limiting or excluding their export to the cytoplasm. In the cytoplasm, the RNA exosome complex is involved in general mRNA turnover and specifically degrades inherently unstable mRNAs containing AU-rich elements (AREs) within their 3' untranslated regions, and in RNA surveillance pathways, preventing translation of aberrant mRNAs. The protein is Exosome complex component RRP45 of Danio rerio (Zebrafish).